Here is a 363-residue protein sequence, read N- to C-terminus: Ribosomal RNA small subunit methyltransferase H (363 aa).

S-adenosyl-L-methionine contacts are provided by residues Gly55–His57, Asp75, Asp122, and Gln129.

It belongs to the methyltransferase superfamily. RsmH family.

Its subcellular location is the cytoplasm. It catalyses the reaction cytidine(1402) in 16S rRNA + S-adenosyl-L-methionine = N(4)-methylcytidine(1402) in 16S rRNA + S-adenosyl-L-homocysteine + H(+). In terms of biological role, specifically methylates the N4 position of cytidine in position 1402 (C1402) of 16S rRNA. The sequence is that of Ribosomal RNA small subunit methyltransferase H from Bordetella petrii (strain ATCC BAA-461 / DSM 12804 / CCUG 43448).